We begin with the raw amino-acid sequence, 1141 residues long: cGMP-inhibited 3',5'-cyclic phosphodiesterase 3A (1141 aa).

The segment at 1 to 42 (MAVRGEAAQDLAKPGLGGASPARVARGNHRHRGESSPSPRGS) is disordered. The chain crosses the membrane as a helical span at residues 62 to 82 (SALCAGSLSVLLALLVRLVGG). The segment at 90-111 (KSQEAAAEEEEEEGARGGVFPG) is disordered. 5 helical membrane passes run 127-147 (LQPA…GLCL), 157-177 (AVAL…SLGV), 182-202 (LLSL…TWLV), 207-227 (LGVL…VSLE), and 229-249 (FKVA…LLLA). Ser-310 carries the post-translational modification Phosphoserine. A compositionally biased stretch (low complexity) spans 433-445 (RVSSTWTTTTSAT). The disordered stretch occupies residues 433 to 483 (RVSSTWTTTTSATGLPTLEPAPVRRDRSASIKPHEAPSPSAVNPDSWNAPG). Over residues 454 to 467 (PVRRDRSASIKPHE) the composition is skewed to basic and acidic residues. Residues 472–483 (SAVNPDSWNAPG) are compositionally biased toward polar residues. A phosphoserine mark is found at Ser-492, Ser-520, Ser-524, and Ser-533. Positions 505 to 654 (VKAKKQNRPG…CQREPQRKAS (150 aa)) are disordered. Residues 522–532 (VPSPSSSPPQG) are compositionally biased toward pro residues. Positions 533-544 (SPASSPVSNSAS) are enriched in low complexity. A compositionally biased stretch (polar residues) spans 618-637 (TSQVTSDYETNNNSDSSDIL). An interaction with SLFN12 region spans residues 669-1141 (KPILAPEPLV…EETLAPQPDL (473 aa)). Positions 674-1093 (PEPLVMDNLD…MMWKKVIEEE (420 aa)) constitute a PDEase domain. His-752 (proton donor) is an active-site residue. Residue His-752 participates in AMP binding. Residues His-756, His-836, Asp-837, and Asp-950 each contribute to the Mn(2+) site. AMP is bound by residues Asp-837, Asp-950, and Gln-1001. Asp-837 serves as a coordination point for Mg(2+). Disordered regions lie at residues 1024 to 1060 (GKWV…SSIA) and 1120 to 1141 (KEEE…QPDL). The span at 1029–1046 (DSDDSGDTDDPEEEEEEA) shows a compositional bias: acidic residues. Ser-1033 is subject to Phosphoserine. Phosphothreonine is present on Thr-1036. A Glycyl lysine isopeptide (Lys-Gly) (interchain with G-Cter in SUMO2) cross-link involves residue Lys-1120.

The protein belongs to the cyclic nucleotide phosphodiesterase family. PDE3 subfamily. Mn(2+) serves as cofactor. The cofactor is Mg(2+).

Its subcellular location is the membrane. It is found in the cytoplasm. The protein localises to the cytosol. The enzyme catalyses a nucleoside 3',5'-cyclic phosphate + H2O = a nucleoside 5'-phosphate + H(+). It catalyses the reaction 3',5'-cyclic AMP + H2O = AMP + H(+). The catalysed reaction is 3',5'-cyclic GMP + H2O = GMP + H(+). It carries out the reaction 3',5'-cyclic UMP + H2O = UMP + H(+). With respect to regulation, inhibited by cGMP. Functionally, cyclic nucleotide phosphodiesterase with specificity for the second messengers cAMP and cGMP, which are key regulators of many important physiological processes. Also has activity toward cUMP. Independently of its catalytic activity it is part of an E2/17beta-estradiol-induced pro-apoptotic signaling pathway. E2 stabilizes the PDE3A/SLFN12 complex in the cytosol, promoting the dephosphorylation of SLFN12 and activating its pro-apoptotic ribosomal RNA/rRNA ribonuclease activity. This apoptotic pathway might be relevant in tissues with high concentration of E2 and be for instance involved in placenta remodeling. This Mus musculus (Mouse) protein is cGMP-inhibited 3',5'-cyclic phosphodiesterase 3A.